A 211-amino-acid chain; its full sequence is Succinate dehydrogenase subunit 4, mitochondrial (211 aa).

The N-terminal 36 residues, 1–36 (MASRLLARSKALALALSRADAAAPGPAAGVQWLRTL), are a transit peptide targeting the mitochondrion. Residues 41 to 64 (RDPAAAASPAPAPRQPAVGSPLGL) form a disordered region. Residue His-166 participates in heme binding. Tyr-179 is an a ubiquinone binding site. The helical transmembrane segment at 188–210 (WVFIYFKILLIIMAKETVVYFDL) threads the bilayer.

As to quaternary structure, component of complex II composed of eight subunits in plants: four classical SDH subunits SDH1, SDH2, SDH3 and SDH4 (a flavoprotein (FP), an iron-sulfur protein (IP), and a cytochrome b composed of a large and a small subunit.), as well as four subunits unknown in mitochondria from bacteria and heterotrophic eukaryotes. Heme serves as cofactor.

Its subcellular location is the mitochondrion inner membrane. The protein operates within carbohydrate metabolism; tricarboxylic acid cycle. In terms of biological role, membrane-anchoring subunit of succinate dehydrogenase (SDH). The protein is Succinate dehydrogenase subunit 4, mitochondrial of Oryza sativa subsp. japonica (Rice).